The sequence spans 349 residues: Polyamine aminopropyltransferase 2 (349 aa).

Residues 29–267 (DGAITAIEDS…SSWGFLLASD (239 aa)) enclose the PABS domain. Gln60 is a binding site for S-methyl-5'-thioadenosine. His91 and Glu115 together coordinate spermidine. Residues Asp135 and 167–168 (DG) contribute to the S-methyl-5'-thioadenosine site. Asp185 serves as the catalytic Proton acceptor. An S-methyl-5'-thioadenosine-binding site is contributed by Pro194.

The protein belongs to the spermidine/spermine synthase family. Homodimer or homotetramer.

Its subcellular location is the cytoplasm. It carries out the reaction S-adenosyl 3-(methylsulfanyl)propylamine + putrescine = S-methyl-5'-thioadenosine + spermidine + H(+). The protein operates within amine and polyamine biosynthesis; spermidine biosynthesis; spermidine from putrescine: step 1/1. In terms of biological role, catalyzes the irreversible transfer of a propylamine group from the amino donor S-adenosylmethioninamine (decarboxy-AdoMet) to putrescine (1,4-diaminobutane) to yield spermidine. In Pseudomonas aeruginosa (strain ATCC 15692 / DSM 22644 / CIP 104116 / JCM 14847 / LMG 12228 / 1C / PRS 101 / PAO1), this protein is Polyamine aminopropyltransferase 2.